The chain runs to 367 residues: Homoserine O-acetyltransferase (367 aa).

An AB hydrolase-1 domain is found at 44–350; it reads NVIMVEHAWT…AYGHDAFLLE (307 aa). Ser150 functions as the Nucleophile in the catalytic mechanism. Arg217 contributes to the substrate binding site. Catalysis depends on residues Asp311 and His344. A substrate-binding site is contributed by Asp345.

The protein belongs to the AB hydrolase superfamily. MetX family. Homodimer.

The protein resides in the cytoplasm. It catalyses the reaction L-homoserine + acetyl-CoA = O-acetyl-L-homoserine + CoA. It participates in amino-acid biosynthesis; L-methionine biosynthesis via de novo pathway; O-acetyl-L-homoserine from L-homoserine: step 1/1. In terms of biological role, transfers an acetyl group from acetyl-CoA to L-homoserine, forming acetyl-L-homoserine. In vitro, can also use propionyl-CoA or butiryl-CoA as acyl donor. This chain is Homoserine O-acetyltransferase, found in Trichlorobacter lovleyi (strain ATCC BAA-1151 / DSM 17278 / SZ) (Geobacter lovleyi).